The sequence spans 663 residues: Zinc finger protein 44 (663 aa).

One can recognise a KRAB domain in the interval 52-138 (VAFEDVAVNF…GETLSQIRNS (87 aa)). The C2H2-type 1; atypical zinc-finger motif lies at 189 to 211 (YTHKQCGKGLSYRHSFQTCERPH). The C2H2-type 2; degenerate zinc finger occupies 217–239 (YDCKECGKTFSSPGNLRRHMVVK). 15 C2H2-type zinc fingers span residues 245-267 (YKCE…ERTH), 273-295 (YECK…EKIH), 301-323 (YECK…ERTH), 329-351 (YKCK…ERIH), 357-379 (YTCK…MIMH), 385-407 (HKCK…EGTH), 413-435 (YECK…MMAH), 441-463 (HKCT…ERTH), 469-491 (YECK…ETTH), 497-518 (YKCK…ETTH), 524-546 (YECK…ERTH), 552-574 (YECQ…ERTH), 580-602 (YECK…ERTH), 608-630 (YECK…ERTH), and 636-658 (YECK…KRTH).

This sequence belongs to the krueppel C2H2-type zinc-finger protein family.

It is found in the nucleus. Functionally, may be involved in transcriptional regulation. The chain is Zinc finger protein 44 (ZNF44) from Homo sapiens (Human).